The sequence spans 335 residues: tRNA N6-adenosine threonylcarbamoyltransferase (335 aa).

His111 and His115 together coordinate Fe cation. Residues Leu133–Gly137, Asp166, Gly179, and Asn276 contribute to the substrate site. Asp301 is a Fe cation binding site.

It belongs to the KAE1 / TsaD family. Requires Fe(2+) as cofactor.

It is found in the cytoplasm. It carries out the reaction L-threonylcarbamoyladenylate + adenosine(37) in tRNA = N(6)-L-threonylcarbamoyladenosine(37) in tRNA + AMP + H(+). In terms of biological role, required for the formation of a threonylcarbamoyl group on adenosine at position 37 (t(6)A37) in tRNAs that read codons beginning with adenine. Is involved in the transfer of the threonylcarbamoyl moiety of threonylcarbamoyl-AMP (TC-AMP) to the N6 group of A37, together with TsaE and TsaB. TsaD likely plays a direct catalytic role in this reaction. This is tRNA N6-adenosine threonylcarbamoyltransferase from Wolbachia pipientis wMel.